Consider the following 273-residue polypeptide: Large ribosomal subunit protein uL2 (273 aa).

The segment at V228–K273 is disordered. The span at K254–K273 shows a compositional bias: basic residues.

It belongs to the universal ribosomal protein uL2 family. In terms of assembly, part of the 50S ribosomal subunit. Forms a bridge to the 30S subunit in the 70S ribosome.

One of the primary rRNA binding proteins. Required for association of the 30S and 50S subunits to form the 70S ribosome, for tRNA binding and peptide bond formation. It has been suggested to have peptidyltransferase activity; this is somewhat controversial. Makes several contacts with the 16S rRNA in the 70S ribosome. This Rickettsia bellii (strain OSU 85-389) protein is Large ribosomal subunit protein uL2.